The chain runs to 21 residues: Alpha-aminoadipic semialdehyde dehydrogenase (21 aa).

Belongs to the aldehyde dehydrogenase family. Homotetramer.

It carries out the reaction (S)-2-amino-6-oxohexanoate + NADP(+) + H2O = L-2-aminoadipate + NADPH + 2 H(+). It catalyses the reaction (S)-2-amino-6-oxohexanoate + NAD(+) + H2O = L-2-aminoadipate + NADH + 2 H(+). This chain is Alpha-aminoadipic semialdehyde dehydrogenase (aldh7a1), found in Ctenopharyngodon idella (Grass carp).